A 293-amino-acid polypeptide reads, in one-letter code: Cytochrome c biogenesis protein CcsA (293 aa).

Transmembrane regions (helical) follow at residues 12–32, 39–59, 78–98, 99–119, 142–162, 216–236, 250–267, and 273–293; these read INILAFLGALVSSLFYWAKLT, VFSLPKFCLIFSNCIIAGMLL, LFLSWVLNIITIIFVDKLSII, GAIGSSAVTLIIGYANYILPP, VMIFSYGLLIMGAFLSLIYVI, FISLGFISLTLGIISGSVWAN, TWALITWLVFATYLHIRI, and KIYASLVASLGLIVICFVTWE.

This sequence belongs to the CcmF/CycK/Ccl1/NrfE/CcsA family. May interact with Ccs1.

Its subcellular location is the plastid. The protein localises to the chloroplast thylakoid membrane. Required during biogenesis of c-type cytochromes (cytochrome c6 and cytochrome f) at the step of heme attachment. This is Cytochrome c biogenesis protein CcsA from Cyanidium caldarium (Red alga).